The sequence spans 274 residues: MPFRSNNPLTRDELLSRFFPQFHPVTTFNSGLSGGSFLIEHQGQRFVVRQPHDPDAPQSAFLRQYRALSQLPACIAPKPHLYLRDWMVVDYLPGEVKTYLPDTNELAGLLYYLHQQPRFGWRITLLPLLELYWQQSDPARRTVGWLRMLKRLRKAREPRLLRLSPLHMDVHAGNLVHSAPGLKLIDWEYAGDGDIALELAAVWVENTDQHRQLVNDYATRAKIYPAQLWRQVRRWFPWLLMLKAGWFEYRWRQTGDQQFIRLADDTWRQLLIKQ.

This sequence belongs to the thiamine kinase family.

It catalyses the reaction thiamine + ATP = thiamine phosphate + ADP + H(+). It functions in the pathway cofactor biosynthesis; thiamine diphosphate biosynthesis; thiamine phosphate from thiamine: step 1/1. Catalyzes the ATP-dependent phosphorylation of thiamine to thiamine phosphate. Is involved in thiamine salvage. The polypeptide is Thiamine kinase (Escherichia coli O81 (strain ED1a)).